The primary structure comprises 161 residues: Cytochrome c-type biogenesis protein CcmE (161 aa).

Residues 1–8 (MNPVRKKR) lie on the Cytoplasmic side of the membrane. The helical; Signal-anchor for type II membrane protein transmembrane segment at 9 to 29 (LYIVLAILCGVSIAVALALTA) threads the bilayer. Over 30–161 (LQENINLFYT…AKGYQQESAQ (132 aa)) the chain is Periplasmic. Positions 124 and 128 each coordinate heme.

It belongs to the CcmE/CycJ family.

The protein localises to the cell inner membrane. Heme chaperone required for the biogenesis of c-type cytochromes. Transiently binds heme delivered by CcmC and transfers the heme to apo-cytochromes in a process facilitated by CcmF and CcmH. The chain is Cytochrome c-type biogenesis protein CcmE from Ectopseudomonas mendocina (strain ymp) (Pseudomonas mendocina).